We begin with the raw amino-acid sequence, 366 residues long: Galactoside alpha-(1,2)-fucosyltransferase 1 (366 aa).

Topologically, residues 1-8 (MWPLSHRH) are cytoplasmic. The helical; Signal-anchor for type II membrane protein transmembrane segment at 9–25 (LCLAFLLVCVLSAISFF) threads the bilayer. The Lumenal portion of the chain corresponds to 26-366 (LHIHQDSIRH…LSPLWTLAEP (341 aa)). 3 N-linked (GlcNAc...) asparagine glycosylation sites follow: asparagine 66, asparagine 302, and asparagine 328.

This sequence belongs to the glycosyltransferase 11 family.

Its subcellular location is the golgi apparatus. It is found in the golgi stack membrane. The enzyme catalyses a beta-D-galactosyl-(1-&gt;4)-N-acetyl-beta-D-glucosaminyl derivative + GDP-beta-L-fucose = an alpha-L-Fuc-(1-&gt;2)-beta-D-Gal-(1-&gt;4)-beta-D-GlcNAc derivative + GDP + H(+). It carries out the reaction a ganglioside GA1 + GDP-beta-L-fucose = a ganglioside Fuc-GA1 + GDP + H(+). It catalyses the reaction a beta-D-Gal-(1-&gt;3)-beta-D-GlcNAc-(1-&gt;3)-beta-D-Gal-(1-&gt;4)-beta-D-Glc-(1&lt;-&gt;1')-Cer(d18:1(4E)) + GDP-beta-L-fucose = alpha-L-fucosyl-(1-&gt;2)- beta-D-galactosyl-(1-&gt;3)-N-acetyl-beta-D-glucosaminyl-(1-&gt;3)-beta-D-galactosyl-(1-&gt;4)-beta-D-glucosyl-(1&lt;-&gt;1')-N-acylsphing-4-enine + GDP + H(+). The catalysed reaction is a neolactoside nLc4Cer(d18:1(4E)) + GDP-beta-L-fucose = a neolactoside IV(2)-alpha-Fuc-nLc4Cer(d18:1(4E)) + GDP + H(+). The enzyme catalyses a ganglioside GM1 + GDP-beta-L-fucose = a ganglioside Fuc-GM1 + GDP + H(+). It carries out the reaction beta-D-galactosyl-(1-&gt;3)-N-acetyl-D-galactosamine + GDP-beta-L-fucose = alpha-L-fucosyl-(1-&gt;2)-beta-D-galactosyl-(1-&gt;3)-N-acetyl-D-galactosamine + GDP + H(+). It participates in protein modification; protein glycosylation. Catalyzes the transfer of L-fucose, from a guanosine diphosphate-beta-L-fucose, to the terminal galactose residue of glycoconjugates through an alpha(1,2) linkage leading to H antigen synthesis that is an intermediate substrate in the synthesis of ABO blood group antigens. H antigen is essential for maturation of the glomerular layer of the main olfactory bulb, in cell migration and early cell-cell contacts during tumor associated angiogenesis. Preferentially fucosylates soluble lactose and to a lesser extent fucosylates glycolipids gangliosides GA1 and GM1a. In Aotus azarae (Azara's night monkey), this protein is Galactoside alpha-(1,2)-fucosyltransferase 1.